We begin with the raw amino-acid sequence, 249 residues long: CDP-diacylglycerol pyrophosphatase (249 aa).

A helical transmembrane segment spans residues 7 to 27 (FLLAVVIVAAVAGIGYWKLAA).

Belongs to the Cdh family.

It is found in the cell inner membrane. The enzyme catalyses a CDP-1,2-diacyl-sn-glycerol + H2O = a 1,2-diacyl-sn-glycero-3-phosphate + CMP + 2 H(+). It participates in phospholipid metabolism; CDP-diacylglycerol degradation; phosphatidate from CDP-diacylglycerol: step 1/1. This Citrobacter koseri (strain ATCC BAA-895 / CDC 4225-83 / SGSC4696) protein is CDP-diacylglycerol pyrophosphatase.